The following is a 576-amino-acid chain: Kinetochore-associated protein DSN1 (576 aa).

Residues 1-11 are compositionally biased toward polar residues; the sequence is MSLEPTQTVSG. Disordered regions lie at residues 1–22, 35–64, 185–205, and 227–246; these read MSLE…RTHK, LESD…NKQS, YSQP…ISSS, and QPHY…SQRG. Over residues 235–246 the composition is skewed to basic residues; that stretch reads RERKKSIGSQRG. Ser250 carries the phosphoserine modification. The tract at residues 412-437 is disordered; that stretch reads RSRRKFSERRKALPKEPKKLLPNSKN. The segment covering 420–430 has biased composition (basic and acidic residues); it reads RRKALPKEPKK.

In terms of assembly, component of the MIND kinetochore complex, which is composed of at least MTW1, NNF1, NSL1 and DSN1. Interacts with NSL1.

It is found in the nucleus. The protein resides in the chromosome. Its subcellular location is the centromere. It localises to the kinetochore. Its function is as follows. Acts as an essential component of the kinetochore MIND complex, which is required for the spindle checkpoint and kinetochore integrity. MIND plays a role in establishing a bipolar spindle-kinetochore interaction by joining kinetochore subunits contacting DNA to those contacting microtubules. This chain is Kinetochore-associated protein DSN1 (DSN1), found in Saccharomyces cerevisiae (strain ATCC 204508 / S288c) (Baker's yeast).